We begin with the raw amino-acid sequence, 504 residues long: MSGRIKTAGRALASQCGGAAAATMDPYDAIEAFDDSLLGSPLAAGPLYDGPSPARFALPPPRPAPLAALLERMQAELGFPDGPALLRAMERWNEDLFSCLPTNADLYADAALLSADADAVVGAMYLAVPGDAERLDLNAHANQPLPAPPASEEGLPEYVAGVQAHFLAELRAREERYAGLFLGYCRALLQHLRATAARGRGAAGAGAQADRLRQLVAARYYREASRLARLAFAHMYVATAREVSWRLHSQQSQAQGVFVSLYYAWPQRRQFTCLFHPVLFNHGVVALEDGFLDAAELRRLNYRRRELGLPLVRAGLVEVEVGPLVEEPPFSGSLPRALGFLNYQVRAKMGAPAEAGGGWRRSGSTRTRGRAARSTTGRLQRPCCGPRRRAKCCRATPRQRLRARGEPRHTSGSGAFSQGRRPGRVCRLGWACKARSGPARGGPGPSPVRSGLGLSRARGSPGPGPACGGPSRARGGRRRASPANPFGGTYDALLGDRLNQLLDF.

3 disordered regions span residues 354 to 381 (EAGGGWRRSGSTRTRGRAARSTTGRLQR), 395 to 421 (ATPRQRLRARGEPRHTSGSGAFSQGRR), and 435 to 486 (RSGP…ANPF). Positions 361 to 378 (RSGSTRTRGRAARSTTGR) are enriched in low complexity. Residues 447-460 (PVRSGLGLSRARGS) are compositionally biased toward low complexity.

The protein belongs to the herpesviridae tegument protein VP16 protein family. In terms of assembly, associates with the VP16-induced complex; binding to host HCFC1 activates VP16 for association with the octamer motif-binding host protein POU2F1, to form a multiprotein-DNA complex responsible for activating transcription of the viral immediate early genes.

It is found in the virion tegument. The protein localises to the host nucleus. Functionally, transcriptional activator of immediate-early (IE) gene products (alpha genes). Acts as a key activator of lytic infection by initiating the lytic program through the assembly of the transcriptional regulatory VP16-induced complex composed of VP16 and two cellular factors, HCFC1 and POU2F1. VP16-induced complex represents a regulatory switch: when it is on, it promotes IE-gene expression and thus lytic infection, and when it is off, it limits IE-gene transcription favoring latent infection. May play a role in the aggregation of tegument proteins around nucleocapsids during virus morphogenesis. In Bos taurus (Bovine), this protein is Tegument protein VP16 homolog.